A 694-amino-acid chain; its full sequence is MLKSLTVKFNKVNPMEGRMEKKLCPNLSSLSQPTIAQGDNQSEKEPLRSRTPITFEKSHSKEDNSTGENSLRDFTPNPDPECRAELTRTMAEMEKTRTGKERPVSFKTKVLETSIINEYTDAHLHNLVERMRERTALYKKTLTEEENFPEVEASSQTAMSTNISPKQENNSKLKEHQDTFSFKPQRVPVKEHLRRMILPRSIDSYTDRVYLLWLLLVTIAYNWNCWLLPVRLVFPCQTPDNKNYWIITDIVCDIIYLCDILLIQPRLQFVRGGEIIVDSNELKRNYRSSTKFRMDVASLLPFEVLYIFFGVNPIFRANRILKYTSFFEFNHHLESIMDKAYVYRVIRTTGYLLFLLHINACVYYWASDYEGIGSTKWVYNGEGNKYLRCFYWAVRTLITIGGLPEPQTSFEIVFQFLNFFSGVFVFSSLIGQMRDVIGAATANQNYFQACMDHIIAYMNKYSIPQSVQYRVRTWLEYTWNSQRILDESNLLENLPTAMQLSIALDINFSIIDKVELFKGCDTQMIYDLLLRLKSTIYLPGDFVCKKGEIGKEMYIIKHGEVQVLGGPDGAQVLVTLKAGSVFGEISLLAKGGGNRRTADVVAHGFANLLTLDKKTLQEILLHYPTSKKLLMKKAKILLSQKGKTTQAIPARPGPAFLFPPKEETPRMLKVLLGNTGKVDLGRLLKGKRKTTTQK.

Topologically, residues 1-210 are cytoplasmic; the sequence is MLKSLTVKFN…SIDSYTDRVY (210 aa). Disordered regions lie at residues 24–82 and 146–177; these read CPNL…DPEC and ENFP…KEHQ. Polar residues-rich tracts occupy residues 26–40 and 153–168; these read NLSS…QGDN and ASSQ…PKQE. The helical transmembrane segment at 211-234 threads the bilayer; it reads LLWLLLVTIAYNWNCWLLPVRLVF. Residues 235-241 are Extracellular-facing; that stretch reads PCQTPDN. The chain crosses the membrane as a helical span at residues 242-262; that stretch reads KNYWIITDIVCDIIYLCDILL. The Cytoplasmic segment spans residues 263-291; it reads IQPRLQFVRGGEIIVDSNELKRNYRSSTK. Residues 292 to 309 traverse the membrane as a helical segment; it reads FRMDVASLLPFEVLYIFF. Residues 310–312 are Extracellular-facing; the sequence is GVN. Residues 313–327 form a helical membrane-spanning segment; the sequence is PIFRANRILKYTSFF. Residues 328 to 340 are Cytoplasmic-facing; the sequence is EFNHHLESIMDKA. An ion conduction pathway region spans residues 340–439; sequence AYVYRVIRTT…IGQMRDVIGA (100 aa). A helical transmembrane segment spans residues 341–363; sequence YVYRVIRTTGYLLFLLHINACVY. Residues 364–385 are Extracellular-facing; it reads YWASDYEGIGSTKWVYNGEGNK. Transmembrane regions (helical) follow at residues 386–412 and 413–437; these read YLRC…SFEI and VFQF…RDVI. Positions 399-402 are selectivity filter; the sequence is TIGG. At 438–694 the chain is on the cytoplasmic side; sequence GAATANQNYF…KGKRKTTTQK (257 aa). The C-linker stretch occupies residues 442–518; the sequence is ANQNYFQACM…SIIDKVELFK (77 aa). The segment at 522-638 is cyclic nucleotide-binding domain; that stretch reads TQMIYDLLLR…LLMKKAKILL (117 aa). 3',5'-cyclic GMP-binding residues include glycine 583, glutamate 584, arginine 596, and threonine 597.

The protein belongs to the cyclic nucleotide-gated cation channel (TC 1.A.1.5) family. CNGB3 subfamily. Forms heterotetrameric channels composed of CNGA3 and CNGB3 subunits with 3:1 stoichiometry. In terms of tissue distribution, small subset of retinal photoreceptor cells and testis.

It localises to the cell membrane. It carries out the reaction Ca(2+)(in) = Ca(2+)(out). The enzyme catalyses Na(+)(in) = Na(+)(out). The catalysed reaction is K(+)(in) = K(+)(out). It catalyses the reaction NH4(+)(in) = NH4(+)(out). It carries out the reaction Rb(+)(in) = Rb(+)(out). The enzyme catalyses Li(+)(in) = Li(+)(out). The catalysed reaction is Cs(+)(in) = Cs(+)(out). Pore-forming subunit of the cone cyclic nucleotide-gated channel. Mediates cone photoresponses at bright light converting transient changes in intracellular cGMP levels into electrical signals. In the dark, cGMP levels are high and keep the channel open enabling a steady inward current carried by Na(+) and Ca(2+) ions that leads to membrane depolarization and neurotransmitter release from synaptic terminals. Upon photon absorption cGMP levels decline leading to channel closure and membrane hyperpolarization that ultimately slows neurotransmitter release and signals the presence of light, the end point of the phototransduction cascade. Conducts cGMP- and cAMP-gated ion currents, with permeability for monovalent and divalent cations. This chain is Cyclic nucleotide-gated channel beta-3, found in Mus musculus (Mouse).